The primary structure comprises 637 residues: tRNA 5-methylaminomethyl-2-thiouridine biosynthesis bifunctional protein MnmC (637 aa).

Residues 1–232 (MPERIEWLED…KRDNLQGEFN (232 aa)) form a tRNA (mnm(5)s(2)U34)-methyltransferase region. Positions 255-637 (IGAGLAGAAV…YGEAKLVSED (383 aa)) are FAD-dependent cmnm(5)s(2)U34 oxidoreductase.

In the N-terminal section; belongs to the methyltransferase superfamily. tRNA (mnm(5)s(2)U34)-methyltransferase family. The protein in the C-terminal section; belongs to the DAO family. FAD serves as cofactor.

The protein resides in the cytoplasm. The catalysed reaction is 5-aminomethyl-2-thiouridine(34) in tRNA + S-adenosyl-L-methionine = 5-methylaminomethyl-2-thiouridine(34) in tRNA + S-adenosyl-L-homocysteine + H(+). Its function is as follows. Catalyzes the last two steps in the biosynthesis of 5-methylaminomethyl-2-thiouridine (mnm(5)s(2)U) at the wobble position (U34) in tRNA. Catalyzes the FAD-dependent demodification of cmnm(5)s(2)U34 to nm(5)s(2)U34, followed by the transfer of a methyl group from S-adenosyl-L-methionine to nm(5)s(2)U34, to form mnm(5)s(2)U34. In Polaromonas sp. (strain JS666 / ATCC BAA-500), this protein is tRNA 5-methylaminomethyl-2-thiouridine biosynthesis bifunctional protein MnmC.